Here is a 225-residue protein sequence, read N- to C-terminus: Ribulose-phosphate 3-epimerase (225 aa).

S9 contributes to the substrate binding site. A divalent metal cation-binding residues include H34, D36, and H68. D36 acts as the Proton acceptor in catalysis. Substrate is bound by residues H68, 144–147, 177–179, and 199–200; these read GFGG, DGG, and GS. Position 177 (D177) interacts with a divalent metal cation. The active-site Proton donor is D177.

This sequence belongs to the ribulose-phosphate 3-epimerase family. The cofactor is a divalent metal cation.

It carries out the reaction D-ribulose 5-phosphate = D-xylulose 5-phosphate. The protein operates within carbohydrate degradation. Its function is as follows. Catalyzes the reversible epimerization of D-ribulose 5-phosphate to D-xylulose 5-phosphate. The chain is Ribulose-phosphate 3-epimerase from Escherichia coli O157:H7.